The primary structure comprises 484 residues: uncharacterized protein (484 aa).

The N-acetyltransferase domain maps to 334–484; the sequence is IIIRQITDND…ENEWIYEVNL (151 aa).

This is an uncharacterized protein from Methanocaldococcus jannaschii (strain ATCC 43067 / DSM 2661 / JAL-1 / JCM 10045 / NBRC 100440) (Methanococcus jannaschii).